The following is a 343-amino-acid chain: Methionine import ATP-binding protein MetN 1 (343 aa).

Residues 2–241 (IKLSNITKVF…PKTPLAQKFI (240 aa)) enclose the ABC transporter domain. Residue 38-45 (GASGAGKS) participates in ATP binding.

Belongs to the ABC transporter superfamily. Methionine importer (TC 3.A.1.24) family. As to quaternary structure, the complex is composed of two ATP-binding proteins (MetN), two transmembrane proteins (MetI) and a solute-binding protein (MetQ).

It is found in the cell inner membrane. It carries out the reaction L-methionine(out) + ATP + H2O = L-methionine(in) + ADP + phosphate + H(+). It catalyses the reaction D-methionine(out) + ATP + H2O = D-methionine(in) + ADP + phosphate + H(+). Its function is as follows. Part of the ABC transporter complex MetNIQ involved in methionine import. Responsible for energy coupling to the transport system. This is Methionine import ATP-binding protein MetN 1 from Salmonella paratyphi A (strain ATCC 9150 / SARB42).